Consider the following 126-residue polypeptide: Probable 4-amino-4-deoxy-L-arabinose-phosphoundecaprenol flippase subunit ArnF (126 aa).

A helical transmembrane segment spans residues 1–21 (MGFLWALFSVGLVSAAQLLLR). The Periplasmic portion of the chain corresponds to 22–47 (SAMVALPPLTDIVAFLQHLLHFQPGT). The chain crosses the membrane as a helical span at residues 48–68 (VGLFFGLLGYLLSMVCWYFAL). Topologically, residues 69-76 (HRLPLSKA) are cytoplasmic. A helical transmembrane segment spans residues 77-97 (YALLSLSYILVWAAAIWLPGW). Over 98–100 (HEP) the chain is Periplasmic. The chain crosses the membrane as a helical span at residues 101 to 121 (FYWQSLLGVTIIVAGVLTIFW). The Cytoplasmic portion of the chain corresponds to 122–126 (PVKRR).

This sequence belongs to the ArnF family. As to quaternary structure, heterodimer of ArnE and ArnF.

The protein resides in the cell inner membrane. Its pathway is bacterial outer membrane biogenesis; lipopolysaccharide biosynthesis. In terms of biological role, translocates 4-amino-4-deoxy-L-arabinose-phosphoundecaprenol (alpha-L-Ara4N-phosphoundecaprenol) from the cytoplasmic to the periplasmic side of the inner membrane. The sequence is that of Probable 4-amino-4-deoxy-L-arabinose-phosphoundecaprenol flippase subunit ArnF from Klebsiella pneumoniae (strain 342).